The sequence spans 190 residues: MIRFEIHGENLTITDAIRNYIEEKIGKLERYFNDVPNATAHVKVKTYQNSATKIEVTIPLKKVTLRAEERNDDLYAGIDLINNKLERQVRKYKTRVNRRNRNRGEQEAFASLPEEKEAVEIQNDENEADNEIEIIRAKNFSLKPMDSEEAVLQMDLLGHDFFIFTDRETDGTSIVYKRKDGKYGLIETTE.

Belongs to the HPF/YfiA ribosome-associated protein family. Long HPF subfamily. In terms of assembly, interacts with 100S ribosomes.

It is found in the cytoplasm. Its function is as follows. Required for dimerization of active 70S ribosomes into 100S ribosomes in stationary phase; 100S ribosomes are translationally inactive and sometimes present during exponential growth. The sequence is that of Ribosome hibernation promotion factor from Staphylococcus saprophyticus subsp. saprophyticus (strain ATCC 15305 / DSM 20229 / NCIMB 8711 / NCTC 7292 / S-41).